The following is a 274-amino-acid chain: uncharacterized protein (274 aa).

A signal peptide spans 1–30 (MTIDTPAREDQTLAATHRAMWALGDYALMA).

The protein to M.tuberculosis Rv1403c.

This is an uncharacterized protein from Mycobacterium bovis (strain ATCC BAA-935 / AF2122/97).